The sequence spans 257 residues: MDATVFTKCERCKQPVYEKDLRARFNVCPNCEFHYPLPAPERVRLLTDAGSFEERDGELAAGDPLGFEGYPDRLRSARKKTGLGDAILSGVGEIGGRRVALAVMDFRFIGGSMGSVVGERVARTVELARAEGLPLVTVSASGGARMFEGIYSLMQMAKTSVALSRFMEGSKPYISILTDPTFGGVTASFATAADIIIAEPGARVGFAGARVIEQTTKERLPEGFQTAEFQREHGMVDRIVHRLALKGDLERLLGFVG.

Positions 5 to 257 (VFTKCERCKQ…DLERLLGFVG (253 aa)) constitute a CoA carboxyltransferase N-terminal domain. Positions 9, 12, 28, and 31 each coordinate Zn(2+). The C4-type zinc-finger motif lies at 9–31 (CERCKQPVYEKDLRARFNVCPNC).

This sequence belongs to the AccD/PCCB family. In terms of assembly, acetyl-CoA carboxylase is a heterohexamer composed of biotin carboxyl carrier protein (AccB), biotin carboxylase (AccC) and two subunits each of ACCase subunit alpha (AccA) and ACCase subunit beta (AccD). Zn(2+) is required as a cofactor.

It localises to the cytoplasm. The enzyme catalyses N(6)-carboxybiotinyl-L-lysyl-[protein] + acetyl-CoA = N(6)-biotinyl-L-lysyl-[protein] + malonyl-CoA. Its pathway is lipid metabolism; malonyl-CoA biosynthesis; malonyl-CoA from acetyl-CoA: step 1/1. In terms of biological role, component of the acetyl coenzyme A carboxylase (ACC) complex. Biotin carboxylase (BC) catalyzes the carboxylation of biotin on its carrier protein (BCCP) and then the CO(2) group is transferred by the transcarboxylase to acetyl-CoA to form malonyl-CoA. The chain is Acetyl-coenzyme A carboxylase carboxyl transferase subunit beta from Rubrobacter xylanophilus (strain DSM 9941 / JCM 11954 / NBRC 16129 / PRD-1).